A 678-amino-acid chain; its full sequence is Methionine--tRNA ligase (678 aa).

The short motif at 14–24 (PYANGSIHLGH) is the 'HIGH' region element. 4 residues coordinate Zn(2+): Cys145, Cys148, Cys158, and Cys161. A 'KMSKS' region motif is present at residues 331-335 (KMSKS). Lys334 contacts ATP. The region spanning 576 to 678 (AFAAVDLRIA…SGAKPGQRVK (103 aa)) is the tRNA-binding domain.

The protein belongs to the class-I aminoacyl-tRNA synthetase family. MetG type 1 subfamily. As to quaternary structure, homodimer. Requires Zn(2+) as cofactor.

The protein resides in the cytoplasm. The enzyme catalyses tRNA(Met) + L-methionine + ATP = L-methionyl-tRNA(Met) + AMP + diphosphate. Functionally, is required not only for elongation of protein synthesis but also for the initiation of all mRNA translation through initiator tRNA(fMet) aminoacylation. This Pseudomonas aeruginosa (strain UCBPP-PA14) protein is Methionine--tRNA ligase.